The following is a 457-amino-acid chain: Tubulin gamma-2 chain (457 aa).

142-148 (AGGTGSG) is a binding site for GTP.

This sequence belongs to the tubulin family. Interacts with Ote. In terms of tissue distribution, expressed in nurse cells and oocytes of developing egg chambers.

The protein localises to the cytoplasm. The protein resides in the cytoskeleton. It localises to the microtubule organizing center. It is found in the centrosome. Its subcellular location is the spindle. Functionally, tubulin is the major constituent of microtubules. The gamma chain is found at microtubule organizing centers (MTOC) such as the spindle poles or the centrosome, suggesting that it is involved in the minus-end nucleation of microtubule assembly. Required for oocyte activation and consequently for organization of the female meiotic spindle. Essential for centrosome organization and assembly of biastral mitotic spindles in embryos. Plays a role in stabilizing the augmin complex on the meiotic spindle. This chain is Tubulin gamma-2 chain (gammaTub37C), found in Drosophila melanogaster (Fruit fly).